Reading from the N-terminus, the 358-residue chain is Protein RecA (358 aa).

66-73 (GPESSGKT) is an ATP binding site.

Belongs to the RecA family.

It is found in the cytoplasm. Can catalyze the hydrolysis of ATP in the presence of single-stranded DNA, the ATP-dependent uptake of single-stranded DNA by duplex DNA, and the ATP-dependent hybridization of homologous single-stranded DNAs. It interacts with LexA causing its activation and leading to its autocatalytic cleavage. The chain is Protein RecA from Herpetosiphon aurantiacus (strain ATCC 23779 / DSM 785 / 114-95).